The following is a 406-amino-acid chain: Kelch domain-containing protein 2 (406 aa).

Kelch repeat units follow at residues Glu-31 to Gly-85, Ser-92 to Asp-136, Leu-148 to Gln-207, His-221 to Ile-259, His-271 to Asn-311, and His-322 to Val-359.

Component of a CRL2(KLHDC2) E3 ubiquitin-protein ligase complex, also named ECS(KLHDC2) complex, composed of CUL2, Elongin BC (ELOB and ELOC), RBX1 and substrate-specific adapter KLHDC2. May form oligomers as a KLHDC2-ELOB-ELOC complex; this interaction is autoinhibitory for the E3 ligase complex as the substrate-binding site of KLHDC2 is blocked in the oligomer. Interacts with CREB3; interaction is direct and specific as it does not interact with CREB1, ATF4, ATF6, JUN, FOS, CEBPA or herpes simplex virus transactivator VP16. In terms of processing, autoubiquitinated by the CRL2(KLHDC2) E3 ligase complex.

It localises to the nucleus. Its pathway is protein modification; protein ubiquitination. Functionally, substrate-recognition component of a Cul2-RING (CRL2) E3 ubiquitin-protein ligase complex of the DesCEND (destruction via C-end degrons) pathway, which recognizes a C-degron located at the extreme C terminus of target proteins, leading to their ubiquitination and degradation. The C-degron recognized by the DesCEND pathway is usually a motif of less than ten residues and can be present in full-length proteins, truncated proteins or proteolytically cleaved forms. The CRL2(KLHDC2) complex specifically recognizes proteins with a diglycine (Gly-Gly) at the C-terminus, leading to their ubiquitination and degradation. The CRL2(KLHDC2) complex mediates ubiquitination and degradation of truncated SELENOK and SELENOS selenoproteins produced by failed UGA/Sec decoding, which end with a diglycine. The CRL2(KLHDC2) complex also recognizes proteolytically cleaved proteins ending with Gly-Gly, such as the N-terminal fragment of USP1, leading to their degradation. May also act as an indirect repressor of CREB3-mediated transcription by interfering with CREB3-DNA-binding. This chain is Kelch domain-containing protein 2, found in Rattus norvegicus (Rat).